A 141-amino-acid polypeptide reads, in one-letter code: HTH-type transcriptional repressor NsrR (141 aa).

One can recognise an HTH rrf2-type domain in the interval 2–129; it reads QLTNFTDFGL…DKHTIQDMLT (128 aa). Positions 28–51 form a DNA-binding region, H-T-H motif; the sequence is ITVVTETFDVSRNHMVKIINKLGQ. [2Fe-2S] cluster-binding residues include cysteine 91, cysteine 96, and cysteine 102.

The cofactor is [2Fe-2S] cluster.

In terms of biological role, nitric oxide-sensitive repressor of genes involved in protecting the cell against nitrosative stress. May require iron for activity. This chain is HTH-type transcriptional repressor NsrR, found in Aliivibrio fischeri (strain ATCC 700601 / ES114) (Vibrio fischeri).